A 341-amino-acid polypeptide reads, in one-letter code: Protein arginine N-methyltransferase 1 (341 aa).

The region spanning 20-315 (ADYYFDSYSH…DCAPFDKNQR (296 aa)) is the SAM-dependent MTase PRMT-type domain. S-adenosyl-L-methionine is bound by residues histidine 33, arginine 42, glycine 66, aspartate 88, and glutamate 117. Residues glutamate 132 and glutamate 141 contribute to the active site.

This sequence belongs to the class I-like SAM-binding methyltransferase superfamily. Protein arginine N-methyltransferase family.

The protein localises to the nucleus. Its subcellular location is the cytoplasm. The protein resides in the cytosol. It catalyses the reaction L-arginyl-[protein] + 2 S-adenosyl-L-methionine = N(omega),N(omega)-dimethyl-L-arginyl-[protein] + 2 S-adenosyl-L-homocysteine + 2 H(+). The catalysed reaction is L-arginyl-[protein] + S-adenosyl-L-methionine = N(omega)-methyl-L-arginyl-[protein] + S-adenosyl-L-homocysteine + H(+). Its function is as follows. Arginine methyltransferase that methylates the guanidino nitrogens of arginyl residues present in proteins such as ribonucleoproteins and histones. This is Protein arginine N-methyltransferase 1 (prmt1) from Dictyostelium discoideum (Social amoeba).